We begin with the raw amino-acid sequence, 233 residues long: RNA-free ribonuclease P (233 aa).

It belongs to the HARP family.

The enzyme catalyses Endonucleolytic cleavage of RNA, removing 5'-extranucleotides from tRNA precursor.. Functionally, RNA-free RNase P that catalyzes the removal of the 5'-leader sequence from pre-tRNA to produce the mature 5'-terminus. In Methanocaldococcus jannaschii (strain ATCC 43067 / DSM 2661 / JAL-1 / JCM 10045 / NBRC 100440) (Methanococcus jannaschii), this protein is RNA-free ribonuclease P.